Here is a 263-residue protein sequence, read N- to C-terminus: Indole-3-glycerol phosphate synthase (263 aa).

It belongs to the TrpC family.

The enzyme catalyses 1-(2-carboxyphenylamino)-1-deoxy-D-ribulose 5-phosphate + H(+) = (1S,2R)-1-C-(indol-3-yl)glycerol 3-phosphate + CO2 + H2O. The protein operates within amino-acid biosynthesis; L-tryptophan biosynthesis; L-tryptophan from chorismate: step 4/5. The sequence is that of Indole-3-glycerol phosphate synthase from Aliarcobacter butzleri (strain RM4018) (Arcobacter butzleri).